The chain runs to 519 residues: Membrane protein insertase YidC (519 aa).

Helical transmembrane passes span 6-26 (ILFV…FAQP), 298-318 (VDFG…VFFY), 324-344 (YGWA…PLTL), 390-410 (LGGC…FTML), 434-454 (FMQF…IGMF), and 471-491 (IMYI…SGLV).

This sequence belongs to the OXA1/ALB3/YidC family. Type 1 subfamily. Interacts with the Sec translocase complex via SecD. Specifically interacts with transmembrane segments of nascent integral membrane proteins during membrane integration.

It is found in the cell inner membrane. Required for the insertion and/or proper folding and/or complex formation of integral membrane proteins into the membrane. Involved in integration of membrane proteins that insert both dependently and independently of the Sec translocase complex, as well as at least some lipoproteins. Aids folding of multispanning membrane proteins. The protein is Membrane protein insertase YidC of Endomicrobium trichonymphae.